The chain runs to 530 residues: uncharacterized protein (530 aa).

This is an uncharacterized protein from Leptospira interrogans serogroup Icterohaemorrhagiae serovar Lai (strain 56601).